The following is a 182-amino-acid chain: ADP-ribosylation factor-like protein 11 (182 aa).

The N-myristoyl glycine moiety is linked to residue Gly2. GTP contacts are provided by residues 19–26 (GLDSAGKT), 63–67 (DVGGQ), and 122–125 (NKQE).

It belongs to the small GTPase superfamily. Arf family.

In terms of biological role, may play a role in apoptosis. May act as a tumor suppressor. In Bos taurus (Bovine), this protein is ADP-ribosylation factor-like protein 11 (ARL11).